The chain runs to 192 residues: Cell division protein SepF (192 aa).

The segment at 154–192 is disordered; the sequence is QEEPAPSNVTTTTQQSEETISESVTAPEPAWGTPVASAI. Residues 162-178 are compositionally biased toward low complexity; sequence VTTTTQQSEETISESVT.

It belongs to the SepF family. Homodimer. Interacts with FtsZ.

It is found in the cytoplasm. In terms of biological role, cell division protein that is part of the divisome complex and is recruited early to the Z-ring. Probably stimulates Z-ring formation, perhaps through the cross-linking of FtsZ protofilaments. Its function overlaps with FtsA. The sequence is that of Cell division protein SepF from Prochlorococcus marinus (strain MIT 9211).